Here is a 104-residue protein sequence, read N- to C-terminus: Cell cycle protein GpsB (104 aa).

A coiled-coil region spans residues 34-72 (LDVVIQDYEVFQKKIERLEQEIHQLRTEAKRAASERQTR). Over residues 60 to 71 (TEAKRAASERQT) the composition is skewed to basic and acidic residues. Residues 60–82 (TEAKRAASERQTRHQTSPSVGST) are disordered. Positions 73 to 82 (HQTSPSVGST) are enriched in polar residues.

The protein belongs to the GpsB family. In terms of assembly, forms polymers through the coiled coil domains. Interacts with PBP1, MreC and EzrA.

Its subcellular location is the cytoplasm. Its function is as follows. Divisome component that associates with the complex late in its assembly, after the Z-ring is formed, and is dependent on DivIC and PBP2B for its recruitment to the divisome. Together with EzrA, is a key component of the system that regulates PBP1 localization during cell cycle progression. Its main role could be the removal of PBP1 from the cell pole after pole maturation is completed. Also contributes to the recruitment of PBP1 to the division complex. Not essential for septum formation. This is Cell cycle protein GpsB from Halalkalibacterium halodurans (strain ATCC BAA-125 / DSM 18197 / FERM 7344 / JCM 9153 / C-125) (Bacillus halodurans).